The following is a 264-amino-acid chain: Thymidylate synthase (264 aa).

DUMP is bound by residues R21 and 126–127; that span reads RR. Residue C146 is the Nucleophile of the active site. DUMP is bound by residues 166–169, N177, and 207–209; these read RSAD and HLY. D169 is a (6R)-5,10-methylene-5,6,7,8-tetrahydrofolate binding site. Residue A263 participates in (6R)-5,10-methylene-5,6,7,8-tetrahydrofolate binding.

This sequence belongs to the thymidylate synthase family. Bacterial-type ThyA subfamily. As to quaternary structure, homodimer.

It is found in the cytoplasm. It carries out the reaction dUMP + (6R)-5,10-methylene-5,6,7,8-tetrahydrofolate = 7,8-dihydrofolate + dTMP. The protein operates within pyrimidine metabolism; dTTP biosynthesis. Functionally, catalyzes the reductive methylation of 2'-deoxyuridine-5'-monophosphate (dUMP) to 2'-deoxythymidine-5'-monophosphate (dTMP) while utilizing 5,10-methylenetetrahydrofolate (mTHF) as the methyl donor and reductant in the reaction, yielding dihydrofolate (DHF) as a by-product. This enzymatic reaction provides an intracellular de novo source of dTMP, an essential precursor for DNA biosynthesis. This is Thymidylate synthase from Halorhodospira halophila (strain DSM 244 / SL1) (Ectothiorhodospira halophila (strain DSM 244 / SL1)).